The chain runs to 92 residues: Acylphosphatase (92 aa).

The 86-residue stretch at 5–90 (TYRLVICGLV…GDFVGFQLRE (86 aa)) folds into the Acylphosphatase-like domain. Catalysis depends on residues Arg-20 and Asn-38.

Belongs to the acylphosphatase family.

It carries out the reaction an acyl phosphate + H2O = a carboxylate + phosphate + H(+). The polypeptide is Acylphosphatase (acyP) (Albidiferax ferrireducens (strain ATCC BAA-621 / DSM 15236 / T118) (Rhodoferax ferrireducens)).